Here is a 119-residue protein sequence, read N- to C-terminus: Beta-2-microglobulin (119 aa).

Positions 1 to 20 are cleaved as a signal peptide; that stretch reads MGRFVAVALLVLLSLSGLET. The Ig-like C1-type domain occupies 25–114; the sequence is PKIQVYSRHP…VTFSTPKTVK (90 aa). An intrachain disulfide couples Cys45 to Cys100.

This sequence belongs to the beta-2-microglobulin family. As to quaternary structure, heterodimer of an alpha chain and a beta chain. Beta-2-microglobulin is the beta-chain of major histocompatibility complex class I molecules.

The protein localises to the secreted. Component of the class I major histocompatibility complex (MHC). Involved in the presentation of peptide antigens to the immune system. This chain is Beta-2-microglobulin (B2M), found in Callicebus personatus nigrifrons (Black-fronted titi).